We begin with the raw amino-acid sequence, 414 residues long: Serine hydroxymethyltransferase (414 aa).

Residues Leu-116 and 120 to 122 (GHL) contribute to the (6S)-5,6,7,8-tetrahydrofolate site. Lys-224 is modified (N6-(pyridoxal phosphate)lysine). Residues Glu-240 and 348–350 (SPF) each bind (6S)-5,6,7,8-tetrahydrofolate.

This sequence belongs to the SHMT family. As to quaternary structure, homodimer. Requires pyridoxal 5'-phosphate as cofactor.

Its subcellular location is the cytoplasm. The catalysed reaction is (6R)-5,10-methylene-5,6,7,8-tetrahydrofolate + glycine + H2O = (6S)-5,6,7,8-tetrahydrofolate + L-serine. The protein operates within one-carbon metabolism; tetrahydrofolate interconversion. It functions in the pathway amino-acid biosynthesis; glycine biosynthesis; glycine from L-serine: step 1/1. Catalyzes the reversible interconversion of serine and glycine with tetrahydrofolate (THF) serving as the one-carbon carrier. This reaction serves as the major source of one-carbon groups required for the biosynthesis of purines, thymidylate, methionine, and other important biomolecules. Also exhibits THF-independent aldolase activity toward beta-hydroxyamino acids, producing glycine and aldehydes, via a retro-aldol mechanism. This is Serine hydroxymethyltransferase from Campylobacter fetus subsp. fetus (strain 82-40).